The following is a 145-amino-acid chain: Large ribosomal subunit protein uL16 (145 aa).

The span at 1–17 shows a compositional bias: basic residues; the sequence is MLMPKRVKHRRVHRGRM. The segment at 1 to 22 is disordered; the sequence is MLMPKRVKHRRVHRGRMTGKAT.

Belongs to the universal ribosomal protein uL16 family. As to quaternary structure, part of the 50S ribosomal subunit.

Its function is as follows. Binds 23S rRNA and is also seen to make contacts with the A and possibly P site tRNAs. The sequence is that of Large ribosomal subunit protein uL16 from Ruminiclostridium cellulolyticum (strain ATCC 35319 / DSM 5812 / JCM 6584 / H10) (Clostridium cellulolyticum).